A 246-amino-acid chain; its full sequence is UPF0758 protein SSU98_1084 (246 aa).

The MPN domain occupies 103-225 (RILGSEKLGR…YYSFREESDV (123 aa)). Residues H174, H176, and D187 each contribute to the Zn(2+) site. The short motif at 174–187 (HNHPSGSVQPSRND) is the JAMM motif element.

This sequence belongs to the UPF0758 family.

The protein is UPF0758 protein SSU98_1084 of Streptococcus suis (strain 98HAH33).